The primary structure comprises 477 residues: Mannitol 2-dehydrogenase (477 aa).

19–30 serves as a coordination point for NAD(+); it reads IVHIGVGNFHRA.

It belongs to the mannitol dehydrogenase family. Monomer.

It carries out the reaction D-mannitol + NAD(+) = D-fructose + NADH + H(+). The chain is Mannitol 2-dehydrogenase (mtlK) from Cereibacter sphaeroides (Rhodobacter sphaeroides).